The sequence spans 1579 residues: Pentafunctional AROM polypeptide (1579 aa).

The 3-dehydroquinate synthase stretch occupies residues 1-383 (MLVKVPILGR…YGKSAHVVSD (383 aa)). Residues 40-42 (DSN), 75-78 (EANK), 106-108 (GGI), and Asp-111 contribute to the NAD(+) site. Residue Arg-122 participates in 7-phospho-2-dehydro-3-deoxy-D-arabino-heptonate binding. Residue 131–132 (TS) participates in NAD(+) binding. 2 residues coordinate 7-phospho-2-dehydro-3-deoxy-D-arabino-heptonate: Asp-138 and Lys-144. Lys-153 serves as a coordination point for NAD(+). 7-phospho-2-dehydro-3-deoxy-D-arabino-heptonate is bound at residue Asn-154. NAD(+) is bound by residues 171–174 (WLQS) and Asn-182. Residue Glu-186 coordinates Zn(2+). Residues 186–189 (EVIK) and Lys-249 contribute to the 7-phospho-2-dehydro-3-deoxy-D-arabino-heptonate site. The active-site Proton acceptor; for 3-dehydroquinate synthase activity is Glu-259. Residues 263-267 (RNLLN) and His-270 contribute to the 7-phospho-2-dehydro-3-deoxy-D-arabino-heptonate site. His-270 contacts Zn(2+). His-274 functions as the Proton acceptor; for 3-dehydroquinate synthase activity in the catalytic mechanism. 7-phospho-2-dehydro-3-deoxy-D-arabino-heptonate is bound by residues His-286 and Lys-355. His-286 provides a ligand contact to Zn(2+). An EPSP synthase region spans residues 396–862 (VYPFNNIPRD…WDVLHTELGA (467 aa)). Catalysis depends on Cys-844, which acts as the For EPSP synthase activity. Residues 881–1071 (SVVIIGMRAA…IPTRRSAFVC (191 aa)) form a shikimate kinase region. 886 to 893 (GMRAAGKT) provides a ligand contact to ATP. The tract at residues 1072 to 1284 (LTFENLTEYT…AAPGQLTVAE (213 aa)) is 3-dehydroquinase. His-1189 functions as the Proton acceptor; for 3-dehydroquinate dehydratase activity in the catalytic mechanism. Lys-1218 serves as the catalytic Schiff-base intermediate with substrate; for 3-dehydroquinate dehydratase activity. The interval 1297–1579 (KKDFFVVGSP…KAIYDAVTEI (283 aa)) is shikimate dehydrogenase.

In the N-terminal section; belongs to the sugar phosphate cyclases superfamily. Dehydroquinate synthase family. The protein in the 2nd section; belongs to the EPSP synthase family. This sequence in the 3rd section; belongs to the shikimate kinase family. It in the 4th section; belongs to the type-I 3-dehydroquinase family. In the C-terminal section; belongs to the shikimate dehydrogenase family. Homodimer. Zn(2+) is required as a cofactor.

It localises to the cytoplasm. The enzyme catalyses 7-phospho-2-dehydro-3-deoxy-D-arabino-heptonate = 3-dehydroquinate + phosphate. It carries out the reaction 3-dehydroquinate = 3-dehydroshikimate + H2O. The catalysed reaction is shikimate + NADP(+) = 3-dehydroshikimate + NADPH + H(+). It catalyses the reaction shikimate + ATP = 3-phosphoshikimate + ADP + H(+). The enzyme catalyses 3-phosphoshikimate + phosphoenolpyruvate = 5-O-(1-carboxyvinyl)-3-phosphoshikimate + phosphate. It functions in the pathway metabolic intermediate biosynthesis; chorismate biosynthesis; chorismate from D-erythrose 4-phosphate and phosphoenolpyruvate: step 2/7. The protein operates within metabolic intermediate biosynthesis; chorismate biosynthesis; chorismate from D-erythrose 4-phosphate and phosphoenolpyruvate: step 3/7. Its pathway is metabolic intermediate biosynthesis; chorismate biosynthesis; chorismate from D-erythrose 4-phosphate and phosphoenolpyruvate: step 4/7. It participates in metabolic intermediate biosynthesis; chorismate biosynthesis; chorismate from D-erythrose 4-phosphate and phosphoenolpyruvate: step 5/7. It functions in the pathway metabolic intermediate biosynthesis; chorismate biosynthesis; chorismate from D-erythrose 4-phosphate and phosphoenolpyruvate: step 6/7. In terms of biological role, the AROM polypeptide catalyzes 5 consecutive enzymatic reactions in prechorismate polyaromatic amino acid biosynthesis. The polypeptide is Pentafunctional AROM polypeptide (Candida glabrata (strain ATCC 2001 / BCRC 20586 / JCM 3761 / NBRC 0622 / NRRL Y-65 / CBS 138) (Yeast)).